The primary structure comprises 234 residues: Leucyl/phenylalanyl-tRNA--protein transferase (234 aa).

This sequence belongs to the L/F-transferase family.

Its subcellular location is the cytoplasm. It carries out the reaction N-terminal L-lysyl-[protein] + L-leucyl-tRNA(Leu) = N-terminal L-leucyl-L-lysyl-[protein] + tRNA(Leu) + H(+). The catalysed reaction is N-terminal L-arginyl-[protein] + L-leucyl-tRNA(Leu) = N-terminal L-leucyl-L-arginyl-[protein] + tRNA(Leu) + H(+). It catalyses the reaction L-phenylalanyl-tRNA(Phe) + an N-terminal L-alpha-aminoacyl-[protein] = an N-terminal L-phenylalanyl-L-alpha-aminoacyl-[protein] + tRNA(Phe). Functionally, functions in the N-end rule pathway of protein degradation where it conjugates Leu, Phe and, less efficiently, Met from aminoacyl-tRNAs to the N-termini of proteins containing an N-terminal arginine or lysine. In Citrobacter koseri (strain ATCC BAA-895 / CDC 4225-83 / SGSC4696), this protein is Leucyl/phenylalanyl-tRNA--protein transferase.